We begin with the raw amino-acid sequence, 617 residues long: Glutamine--fructose-6-phosphate aminotransferase [isomerizing] (617 aa).

Cysteine 2 (nucleophile; for GATase activity) is an active-site residue. Positions 2-222 (CGIIGLAFAE…DGEFGWISPE (221 aa)) constitute a Glutamine amidotransferase type-2 domain. SIS domains lie at 293-432 (AAGL…EAGR) and 466-607 (AASL…PDKP). Lysine 612 serves as the catalytic For Fru-6P isomerization activity.

In terms of assembly, homodimer.

It is found in the cytoplasm. It catalyses the reaction D-fructose 6-phosphate + L-glutamine = D-glucosamine 6-phosphate + L-glutamate. In terms of biological role, catalyzes the first step in hexosamine metabolism, converting fructose-6P into glucosamine-6P using glutamine as a nitrogen source. The sequence is that of Glutamine--fructose-6-phosphate aminotransferase [isomerizing] from Aeropyrum pernix (strain ATCC 700893 / DSM 11879 / JCM 9820 / NBRC 100138 / K1).